A 437-amino-acid polypeptide reads, in one-letter code: GTPase Obg (437 aa).

The Obg domain maps to 2–160; sequence SMFLDTAKIS…RQLELELKIL (159 aa). The OBG-type G domain maps to 161 to 338; sequence ADVGLVGFPS…LLEATAELLA (178 aa). GTP contacts are provided by residues 167–174, 192–196, 214–217, 284–287, and 319–321; these read GFPSVGKS, FTTIV, DLPG, NKMD, and SSL. Mg(2+) is bound by residues S174 and T194. One can recognise an OCT domain in the interval 359-437; it reads GFAEAEKDFE…IGKFEFEFVD (79 aa).

The protein belongs to the TRAFAC class OBG-HflX-like GTPase superfamily. OBG GTPase family. As to quaternary structure, monomer. Mg(2+) serves as cofactor.

It is found in the cytoplasm. In terms of biological role, an essential GTPase which binds GTP, GDP and possibly (p)ppGpp with moderate affinity, with high nucleotide exchange rates and a fairly low GTP hydrolysis rate. Plays a role in control of the cell cycle, stress response, ribosome biogenesis and in those bacteria that undergo differentiation, in morphogenesis control. This chain is GTPase Obg, found in Streptococcus pyogenes serotype M18 (strain MGAS8232).